The sequence spans 87 residues: HssA/B-like protein 58 (87 aa).

A compositionally biased stretch (polar residues) spans 1 to 13 (MTILSAITSISRP). The segment at 1 to 31 (MTILSAITSISRPNKSSKSVISSNGGSSLSM) is disordered. A compositionally biased stretch (low complexity) spans 14-31 (NKSSKSVISSNGGSSLSM).

It belongs to the hssA/B family.

In Dictyostelium discoideum (Social amoeba), this protein is HssA/B-like protein 58 (hssl58).